The sequence spans 663 residues: UvrABC system protein B (663 aa).

A Helicase ATP-binding domain is found at 27–414 (KNIENGVKDQ…SDNHIAEQLI (388 aa)). 40 to 47 (GVTGSGKT) is an ATP binding site. Positions 93–116 (YYDYYQPEAYIKTTDTYIEKDSSV) match the Beta-hairpin motif. One can recognise a Helicase C-terminal domain in the interval 432 to 594 (QVDDLLDEIR…IDPKSIIKEI (163 aa)). The UVR domain maps to 624–659 (EKEITKLEKKIKKLVEELDFEQAIILRDEMLKLKEL).

It belongs to the UvrB family. As to quaternary structure, forms a heterotetramer with UvrA during the search for lesions. Interacts with UvrC in an incision complex.

Its subcellular location is the cytoplasm. Its function is as follows. The UvrABC repair system catalyzes the recognition and processing of DNA lesions. A damage recognition complex composed of 2 UvrA and 2 UvrB subunits scans DNA for abnormalities. Upon binding of the UvrA(2)B(2) complex to a putative damaged site, the DNA wraps around one UvrB monomer. DNA wrap is dependent on ATP binding by UvrB and probably causes local melting of the DNA helix, facilitating insertion of UvrB beta-hairpin between the DNA strands. Then UvrB probes one DNA strand for the presence of a lesion. If a lesion is found the UvrA subunits dissociate and the UvrB-DNA preincision complex is formed. This complex is subsequently bound by UvrC and the second UvrB is released. If no lesion is found, the DNA wraps around the other UvrB subunit that will check the other stand for damage. This chain is UvrABC system protein B, found in Fusobacterium nucleatum subsp. nucleatum (strain ATCC 25586 / DSM 15643 / BCRC 10681 / CIP 101130 / JCM 8532 / KCTC 2640 / LMG 13131 / VPI 4355).